The primary structure comprises 579 residues: Aspartate--tRNA(Asp/Asn) ligase (579 aa).

Glu171 is an L-aspartate binding site. Positions 195–198 (QLFK) are aspartate. Arg217 lines the L-aspartate pocket. Residues 217–219 (RDE) and Gln226 each bind ATP. Residue His444 coordinates L-aspartate. Residue Glu475 coordinates ATP. Arg482 serves as a coordination point for L-aspartate. Residue 527-530 (GLDR) coordinates ATP.

This sequence belongs to the class-II aminoacyl-tRNA synthetase family. Type 1 subfamily. As to quaternary structure, homodimer.

Its subcellular location is the cytoplasm. The catalysed reaction is tRNA(Asx) + L-aspartate + ATP = L-aspartyl-tRNA(Asx) + AMP + diphosphate. Its function is as follows. Aspartyl-tRNA synthetase with relaxed tRNA specificity since it is able to aspartylate not only its cognate tRNA(Asp) but also tRNA(Asn). Reaction proceeds in two steps: L-aspartate is first activated by ATP to form Asp-AMP and then transferred to the acceptor end of tRNA(Asp/Asn). The protein is Aspartate--tRNA(Asp/Asn) ligase of Thermotoga maritima (strain ATCC 43589 / DSM 3109 / JCM 10099 / NBRC 100826 / MSB8).